Reading from the N-terminus, the 60-residue chain is 5-hydroxytryptamine receptor 2B (60 aa).

At 1–4 the chain is on the extracellular side; that stretch reads VLCP. Residues 5–26 traverse the membrane as a helical segment; it reads AWLFLDVLFSTASIMHLCAISV. Ergotamine-binding residues include aspartate 10 and threonine 15. The DRY motif; important for ligand-induced conformation changes motif lies at 27–29; it reads DRY. Topologically, residues 27–46 are cytoplasmic; the sequence is DRYIAIKKPIQANQYNSRAT. A helical membrane pass occupies residues 47–60; the sequence is AFIKITVVWLISIG.

It belongs to the G-protein coupled receptor 1 family. As to quaternary structure, interacts (via C-terminus) with MPDZ. In terms of tissue distribution, detected in aorta, renal artery, jugular vein, vena cava and femoral vein.

Its subcellular location is the cell membrane. The protein localises to the synapse. It localises to the synaptosome. Functionally, G-protein coupled receptor for 5-hydroxytryptamine (serotonin). Also functions as a receptor for various ergot alkaloid derivatives and psychoactive substances. Ligand binding causes a conformation change that triggers signaling via guanine nucleotide-binding proteins (G proteins) and modulates the activity of downstream effectors. HTR2B is coupled to G(q)/G(11) G alpha proteins and activates phospholipase C-beta, releasing diacylglycerol (DAG) and inositol 1,4,5-trisphosphate (IP3) second messengers that modulate the activity of phosphatidylinositol 3-kinase and promote the release of Ca(2+) ions from intracellular stores, respectively. Beta-arrestin family members inhibit signaling via G proteins and mediate activation of alternative signaling pathways. Plays a role in the regulation of dopamine and 5-hydroxytryptamine release, 5-hydroxytryptamine uptake and in the regulation of extracellular dopamine and 5-hydroxytryptamine levels, and thereby affects neural activity. May play a role in the perception of pain. Plays a role in the regulation of behavior, including impulsive behavior. Required for normal proliferation of embryonic cardiac myocytes and normal heart development. Protects cardiomyocytes against apoptosis. Plays a role in the adaptation of pulmonary arteries to chronic hypoxia. Plays a role in vasoconstriction. Required for normal osteoblast function and proliferation, and for maintaining normal bone density. Required for normal proliferation of the interstitial cells of Cajal in the intestine. The sequence is that of 5-hydroxytryptamine receptor 2B (HTR2B) from Sus scrofa (Pig).